The chain runs to 687 residues: Adhesion G-protein coupled receptor G1 (687 aa).

The N-terminal stretch at 1 to 25 (MTAQSLLQTTLFLLSLLFLVQGAHG) is a signal peptide. Residue 26 to 33 (RGHREDFR) participates in heparin binding. Residues 26–402 (RGHREDFRFC…VEVDAVHKHY (377 aa)) are Extracellular-facing. Intrachain disulfides connect Cys-35–Cys-91 and Cys-121–Cys-177. Residues Asn-39, Asn-148, and Asn-171 are each glycosylated (N-linked (GlcNAc...) asparagine). Heparin is bound at residue 190–200 (LKHPQKASRRP). The GAIN-B domain occupies 224 to 395 (DTVSFEEDRI…AVLMVSSVEV (172 aa)). Residues Asn-234, Asn-303, Asn-324, and Asn-341 are each glycosylated (N-linked (GlcNAc...) asparagine). 2 disulfides stabilise this stretch: Cys-346–Cys-377 and Cys-366–Cys-379. Residues 346–395 (CVFWVEDPTLSSPGHWSSAGCETVRRETQTSCLCNHLTYFAVLMVSSVEV) are GPS. Residues 384–397 (YFAVLMVSSVEVDA) are stachel. A helical transmembrane segment spans residues 403–423 (LSLLSYVGCVVSALACVVTIA). Residues 424–442 (AYLCSRRKPRDYTIKVHMN) are Cytoplasmic-facing. The helical transmembrane segment at 443–463 (LLLAVFLLDTSFLLSEPVALT) threads the bilayer. Over 464–470 (GSEAGCR) the chain is Extracellular. The helical transmembrane segment at 471 to 491 (ASAIFLHFSLLACLSWMGLEG) threads the bilayer. Residues 492–512 (YNLYRLVVEVFGTYVPGYLLK) are Cytoplasmic-facing. The helical transmembrane segment at 513-533 (LSAMGWGFPIFLVTLVALVDV) threads the bilayer. Topologically, residues 534–570 (DNYGPIILAVHRTPEGVIYPSMCWIRDSLVSYITNLG) are extracellular. Residues 571–591 (LFSLVFLFNMAMLATMVVQIL) traverse the membrane as a helical segment. Residues 592-603 (RLRPHTQKWSHV) are Cytoplasmic-facing. The helical transmembrane segment at 604–624 (LTLLGLSLVLGLPWALIFFSF) threads the bilayer. Topologically, residues 625–630 (ASGTFQ) are extracellular. The helical transmembrane segment at 631 to 651 (LVILYLFSIITSFQGFLIFIW) threads the bilayer. Residues 652–687 (YWSMRLQARGGPSPLKSNSDSARLPISSGSTSSSRI) lie on the Cytoplasmic side of the membrane. The segment at 664–687 (SPLKSNSDSARLPISSGSTSSSRI) is disordered. The segment covering 678-687 (SSGSTSSSRI) has biased composition (low complexity).

The protein belongs to the G-protein coupled receptor 2 family. LN-TM7 subfamily. As to quaternary structure, heterodimer of 2 chains generated by proteolytic processing; the large extracellular N-terminal fragment (ADGRG1 NT) and the membrane-bound C-terminal fragment (ADGRG1-CT) predominantly remain associated and non-covalently linked. ADGRG1 NT self-associates in a trans-trans manner; the homophilic interaction enhances receptor signaling. Interacts with TGM2. Interacts with heparin; leading to the reduction of ADGRG1 shedding. Interacts with COL3A1. Part of a GPCR-tetraspanin complex at least consisting of ADGRG1, CD81, eventually CD9, and GNA11 in which CD81 is enhancing the association of ADGRG1 with GNA11. In terms of processing, autoproteolytically cleaved into 2 fragments; the large extracellular N-terminal fragment (ADGRG1 NT) and the membrane-bound C-terminal fragment (ADGRG1 CT) predominantly remain associated and non-covalently linked. Shedding to yield the secreted ADGRG1 N-terminal fragment seems to involve metalloprotease(s). Post-translationally, ubiquitinated. Undergoes polyubiquitination upon activation.

It localises to the cell membrane. The protein resides in the secreted. Its subcellular location is the membrane raft. Forms a heterodimer of 2 chains generated by proteolytic processing that remain associated through non-covalent interactions mediated by the GAIN-B domain. In the inactivated receptor, the Stachel sequence (also named stalk) is embedded in the GAIN-B domain, where it adopts a beta-strand conformation. On activation, the Stachel moves into the 7 transmembrane region and adopts a twisted hook-shaped configuration that forms contacts within the receptor, leading to coupling of a G-alpha protein, which activates signaling. The cleaved GAIN-B and N-terminal domains can then dissociate from the rest of the receptor. Its function is as follows. Adhesion G-protein coupled receptor (aGPCR) for steroid hormone 17alpha-hydroxypregnenolone (17-OH), which is involved in cell adhesion and cell-cell interactions. Ligand binding causes a conformation change that triggers signaling via guanine nucleotide-binding proteins (G proteins) and modulates the activity of downstream effectors, such as RhoA pathway. ADGRG1 is coupled to G(12) and/or G(13) G proteins (GNA12 and GNA13, respectively) and mediates the activation Rho small GTPases. Acts as a potent suppressor of ferroptosis: binding to 17-OH-binding initiates signaling that down-regulates CD36 and alleviates ferroptosis-induced liver injury. Ligand-binding also induces cell adhesion activity via association with proteins such as collagen III/COL3A1 and TGM2. Mediates cell matrix adhesion in developing neurons and hematopoietic stem cells. Involved in cortical development, specifically in maintenance of the pial basement membrane integrity and in cortical lamination: association with COL3A1 in the developing brain inhibits neuronal migration via activation of the RhoA pathway. Together with TGM2, acts as a regulator of myelination and myelin repair in oligodendrocyte precursor cells. Acts as a hemostatic sensor of shear force: G protein-coupled receptor signaling is activated in response to shear force in platelets, promoting G(13) G protein signaling, and platelet shape change and aggregation in a COL3A1-dependent manner. Acts as an inhibitor of VEGFA production thereby inhibiting angiogenesis through a signaling pathway mediated by PRKCA. Plays a role in the maintenance of hematopoietic stem cells in bone marrow niche. Plays an essential role in testis development. The chain is Adhesion G-protein coupled receptor G1 (ADGRG1) from Pan troglodytes (Chimpanzee).